Reading from the N-terminus, the 419-residue chain is MSHSEAMKAVAVKAKEASRKIACADGTARNAAIIELAALLEQEKEFIFAENKKDLDAAKERGLDQARLQRLEITPSVLEYMIQGCNEVAGQADPVGEIEKMERRPNGMMVGKMRIPLGVIMMIFESRPNVTVDAAVLCLKAGNSVILRGGSEAIHSNLALASLLQKALGKADLPAEAVQVVEVTDREAVGELLKLDEYIDVVIPRGGEGLIRAVVSQATMPVLKHYKGVCHMYVDSDCEIPEAMDIIKNAKTQKPAACNSLECLLVHEDIAKEILPSLGVLLGACGVTMKGCPRAMPLLGPKAIAADFDDWGMEYLDLILCVKVVSTQDEAQDHISRYGSNHSEVILTKNHDRAMRFIREVDASMVGVNASTRFNDGGQLGLGAEIGISTSKLHSYGPMGATELTSTKFVLLGNWDVRN.

Belongs to the gamma-glutamyl phosphate reductase family.

Its subcellular location is the cytoplasm. It catalyses the reaction L-glutamate 5-semialdehyde + phosphate + NADP(+) = L-glutamyl 5-phosphate + NADPH + H(+). It participates in amino-acid biosynthesis; L-proline biosynthesis; L-glutamate 5-semialdehyde from L-glutamate: step 2/2. Catalyzes the NADPH-dependent reduction of L-glutamate 5-phosphate into L-glutamate 5-semialdehyde and phosphate. The product spontaneously undergoes cyclization to form 1-pyrroline-5-carboxylate. The sequence is that of Gamma-glutamyl phosphate reductase from Maridesulfovibrio salexigens (strain ATCC 14822 / DSM 2638 / NCIMB 8403 / VKM B-1763) (Desulfovibrio salexigens).